A 264-amino-acid chain; its full sequence is tRNA pseudouridine synthase A (264 aa).

D52 (nucleophile) is an active-site residue. Substrate is bound at residue Y110.

The protein belongs to the tRNA pseudouridine synthase TruA family. In terms of assembly, homodimer.

The enzyme catalyses uridine(38/39/40) in tRNA = pseudouridine(38/39/40) in tRNA. Functionally, formation of pseudouridine at positions 38, 39 and 40 in the anticodon stem and loop of transfer RNAs. The protein is tRNA pseudouridine synthase A of Wigglesworthia glossinidia brevipalpis.